A 96-amino-acid chain; its full sequence is uncharacterized protein (96 aa).

Residues 38 to 91 (IEQLRKGTGLKIDDFARVLGVSVAMVKEWESRRVKPSSAELKLMRLIQANPALS) form the HTH cro/C1-type domain. A DNA-binding region (H-T-H motif) is located at residues 49 to 68 (IDDFARVLGVSVAMVKEWES).

This is an uncharacterized protein from Escherichia coli O157:H7.